Reading from the N-terminus, the 295-residue chain is Acetaldehyde dehydrogenase 2 (295 aa).

17-20 (TGNI) lines the NAD(+) pocket. The Acyl-thioester intermediate role is filled by cysteine 132. Residues 164–172 (SVGPASRAN) and asparagine 275 contribute to the NAD(+) site.

This sequence belongs to the acetaldehyde dehydrogenase family.

It carries out the reaction acetaldehyde + NAD(+) + CoA = acetyl-CoA + NADH + H(+). The sequence is that of Acetaldehyde dehydrogenase 2 from Salinispora arenicola (strain CNS-205).